The following is a 336-amino-acid chain: Izumo sperm-egg fusion protein 1 (336 aa).

The N-terminal stretch at 1–16 (MTLPILLGWFLTLCSS) is a signal peptide. The region spanning 158 to 247 (PPLDCGEHHL…LKDQKGTALS (90 aa)) is the Ig-like C2-type domain. A disulfide bond links Cys-179 and Cys-236. Residues 287 to 307 (SFLTVLILLTVLSITGSLIII) form a helical membrane-spanning segment.

Belongs to the Izumo family. Forms a complex with tmem81 and spaca6 on spermatocyte cell membrane. The complex binds to oocyte protein bncr. As to expression, expressed in sperm.

Its subcellular location is the cell membrane. The protein localises to the cytoplasmic vesicle. It localises to the secretory vesicle. The protein resides in the acrosome membrane. Essential sperm cell-surface protein required for fertilization by acting as a ligand for bncr receptor on egg. The interaction of the complex izumo1:spaca6:tmemt81 with bncr is a necessary adhesion event between sperm and egg that is required for fertilization. The protein is Izumo sperm-egg fusion protein 1 of Danio rerio (Zebrafish).